The chain runs to 267 residues: Acyl-[acyl-carrier-protein]--UDP-N-acetylglucosamine O-acyltransferase (267 aa).

It belongs to the transferase hexapeptide repeat family. LpxA subfamily. As to quaternary structure, homotrimer.

It localises to the cytoplasm. It catalyses the reaction a (3R)-hydroxyacyl-[ACP] + UDP-N-acetyl-alpha-D-glucosamine = a UDP-3-O-[(3R)-3-hydroxyacyl]-N-acetyl-alpha-D-glucosamine + holo-[ACP]. It participates in glycolipid biosynthesis; lipid IV(A) biosynthesis; lipid IV(A) from (3R)-3-hydroxytetradecanoyl-[acyl-carrier-protein] and UDP-N-acetyl-alpha-D-glucosamine: step 1/6. Involved in the biosynthesis of lipid A, a phosphorylated glycolipid that anchors the lipopolysaccharide to the outer membrane of the cell. The chain is Acyl-[acyl-carrier-protein]--UDP-N-acetylglucosamine O-acyltransferase from Cupriavidus pinatubonensis (strain JMP 134 / LMG 1197) (Cupriavidus necator (strain JMP 134)).